We begin with the raw amino-acid sequence, 166 residues long: Lipoprotein signal peptidase (166 aa).

Transmembrane regions (helical) follow at residues 9–29 (ASGALAPWLGISLIVILFDQL), 45–65 (ALTSFFNLVLVYNRGAAFGFL), 71–91 (WQRWAFTALGVGATLVICFLL), and 100–120 (FSLSLALILGGALGNVIDRLV). Active-site residues include D126 and D144. Residues 135 to 155 (WHFPAFNLADSAITIGAVLLI) traverse the membrane as a helical segment.

The protein belongs to the peptidase A8 family.

Its subcellular location is the cell inner membrane. It catalyses the reaction Release of signal peptides from bacterial membrane prolipoproteins. Hydrolyzes -Xaa-Yaa-Zaa-|-(S,diacylglyceryl)Cys-, in which Xaa is hydrophobic (preferably Leu), and Yaa (Ala or Ser) and Zaa (Gly or Ala) have small, neutral side chains.. It participates in protein modification; lipoprotein biosynthesis (signal peptide cleavage). This protein specifically catalyzes the removal of signal peptides from prolipoproteins. The chain is Lipoprotein signal peptidase from Burkholderia multivorans (strain ATCC 17616 / 249).